The following is a 101-amino-acid chain: Ubiquitin-related modifier 1 (101 aa).

Glycine 101 carries the 1-thioglycine modification. A Glycyl lysine isopeptide (Gly-Lys) (interchain with K-? in acceptor proteins) cross-link involves residue glycine 101.

It belongs to the URM1 family. In terms of processing, C-terminal thiocarboxylation occurs in 2 steps, it is first acyl-adenylated (-COAMP) via the hesA/moeB/thiF part of UBA4, then thiocarboxylated (-COSH) via the rhodanese domain of UBA4.

It localises to the cytoplasm. Its pathway is tRNA modification; 5-methoxycarbonylmethyl-2-thiouridine-tRNA biosynthesis. Acts as a sulfur carrier required for 2-thiolation of mcm(5)S(2)U at tRNA wobble positions of cytosolic tRNA(Lys), tRNA(Glu) and tRNA(Gln). Serves as sulfur donor in tRNA 2-thiolation reaction by being thiocarboxylated (-COSH) at its C-terminus by the MOCS3 homolog UBA4. The sulfur is then transferred to tRNA to form 2-thiolation of mcm(5)S(2)U. Prior mcm(5) tRNA modification by the elongator complex is required for 2-thiolation. Also acts as a ubiquitin-like protein (UBL) that is covalently conjugated via an isopeptide bond to lysine residues of target proteins such as AHP1. The thiocarboxylated form serves as substrate for conjugation and oxidative stress specifically induces the formation of UBL-protein conjugates. The polypeptide is Ubiquitin-related modifier 1 (Scheffersomyces stipitis (strain ATCC 58785 / CBS 6054 / NBRC 10063 / NRRL Y-11545) (Yeast)).